The sequence spans 1431 residues: 1-phosphatidylinositol 4,5-bisphosphate phosphodiesterase beta egl-8 (1431 aa).

One can recognise a PI-PLC X-box domain in the interval 340–491; it reads MDMDQPLCHY…LRKKILIKNK (152 aa). His355 is a catalytic residue. Positions 356, 385, and 387 each coordinate Ca(2+). His403 is a catalytic residue. Position 437 (Glu437) interacts with Ca(2+). Substrate-binding residues include Lys489 and Lys491. 2 disordered regions span residues 510 to 601 and 632 to 692; these read KLDE…MVPD and RRQS…SGPS. The span at 543 to 556 shows a compositional bias: acidic residues; sequence EEVDDDTSDDDDDP. Low complexity-rich tracts occupy residues 572–586, 652–661, and 668–692; these read NTTSNNGSNRSARSS, SSSSPATPSI, and ATSSGSTSSITITTTGCSTSSSGPS. The PI-PLC Y-box domain maps to 758–874; that stretch reads LSSLVNYTHP…GYLLKPDFLR (117 aa). 2 residues coordinate substrate: Ser787 and Arg814. Residues 877 to 1002 enclose the C2 domain; it reads DRTFDPFSES…SLRSDTNQSF (126 aa). Disordered stretches follow at residues 1072-1119, 1150-1176, and 1188-1216; these read QPPR…VAVD, DLRKKHQKQRDSIQKQQPARRRNSSIA, and NNRRSTKKEKGSRRSLTASVSSGCGSASG. Residues 1074–1113 are compositionally biased toward polar residues; that stretch reads PRQNGSSADLLANNGQTGSARGDQTSSMASSTIRSPNEQP. Positions 1135 to 1166 form a coiled coil; that stretch reads KAFAKLLKRFQKELDDLRKKHQKQRDSIQKQQ. The span at 1150-1162 shows a compositional bias: basic and acidic residues; that stretch reads DLRKKHQKQRDSI. Over residues 1191 to 1200 the composition is skewed to basic residues; it reads RSTKKEKGSR. Over residues 1204–1216 the composition is skewed to low complexity; the sequence is TASVSSGCGSASG. 2 coiled-coil regions span residues 1288–1318 and 1368–1402; these read DEEEFELKKVQLKEQFDLLRKLMSEAQKNQM and EKNLKMFVEERKRLAMKAQKHEEQLTKRHLDQLEQ.

The cofactor is Ca(2+). As to expression, expressed in most or all neurons with high expression in the head and tail ganglia and low expression in the motor neurons of the ventral cord. Expressed in the intestine (at protein level). In males, expressed in vas deferens, spicule protractor muscles, diagonal muscles and a male-specific neuron.

It is found in the perikaryon. The protein resides in the cell projection. The protein localises to the axon. It localises to the synapse. Its subcellular location is the cell junction. It is found in the adherens junction. The enzyme catalyses a 1,2-diacyl-sn-glycero-3-phospho-(1D-myo-inositol-4,5-bisphosphate) + H2O = 1D-myo-inositol 1,4,5-trisphosphate + a 1,2-diacyl-sn-glycerol + H(+). Its function is as follows. Mediates the production of the second messenger molecules diacylglycerol (DAG) and inositol 1,4,5-trisphosphate (IP3) which plays an important role in the regulation of intracellular signaling cascades. Required in the nervous system to modulate neuronal activity. Facilitates synaptic transmission at neuromuscular junctions by regulating the release of acetylcholine from the motor neurons and thus affecting locomotion. Plays a role in efficient egg laying and defecation. Involved in axon regeneration after injury. Plays a role in male mating behavior by regulating spicule insertion and sperm transfer. By triggering Ca(2+) transient via IP3-mediated activation of IPR3 receptor itr-1 in ASH sensory neurons, regulates avoidance behavior in response to nose touch. By activating tpa-1 via DAG production, required for the expression of antimicrobial peptide nlp-29 in response to fungal infection. During embryogenesis, may play a role in epidermal morphogenesis together with plc-1. In Caenorhabditis elegans, this protein is 1-phosphatidylinositol 4,5-bisphosphate phosphodiesterase beta egl-8.